A 563-amino-acid polypeptide reads, in one-letter code: MWGALRSVLRPCSRASVPRQRAYHGDAVARLGTQPDSGSSTYQENYEQMKALVNQLHERAQYVRLGGSEKARARHTSRGKLLPRDRIDNLIDPGSPFLEFSQFAGYKLYGEEEVPAGGIITGIGRVSGVECMIVANDATVKGGTYYPVTVKKHVRAQEIALQNRLPCIYLVDSGGANLPRQADTFPDRDHFGRIFYNQAIMSSKNITQIAVVMGSCTAGGAYVPAMADENIIVQRQGTIFLAGPPLVKAATGEEVSAEDLGGADLHCRRSGVTDHYALDDHHALHLTRKVVRSLNYQKKLDVTVEPSEEPLFPADELYGIVGANLKRSFDVREVIARIVDGSRFNEFKALYGDTLVTGFARIFGYPVGIIGNNGVLFSESAKKGAHFVQLCCQRNIPLLFLQNITGFMVGKDYEAEGIAKDGAKMVAAVSCAKVPKITVIIGGSYGAGNYGMCGRAYSPRFLYMWPNARISVMGGEQAATVLATVARDQRAREGKQFSSAEEAALKEPIIKRFEEEGNPYYSSARLWDDGIIDPVDTRLVLGLSISAALNAPIQRTDFGIFRM.

A mitochondrion-targeting transit peptide spans 1–22; it reads MWGALRSVLRPCSRASVPRQRA. The region spanning 49 to 306 is the CoA carboxyltransferase N-terminal domain; it reads MKALVNQLHE…QKKLDVTVEP (258 aa). Residues 49–555 are carboxyltransferase; the sequence is MKALVNQLHE…SAALNAPIQR (507 aa). Residue Lys-70 is modified to N6-acetyllysine; alternate. An N6-succinyllysine; alternate modification is found at Lys-70. At Lys-141 the chain carries N6-succinyllysine. The 247-residue stretch at 309–555 folds into the CoA carboxyltransferase C-terminal domain; sequence EPLFPADELY…SAALNAPIQR (247 aa). An acyl-CoA binding region spans residues 343 to 372; sequence RFNEFKALYGDTLVTGFARIFGYPVGIIGN. Lys-433 bears the N6-succinyllysine mark. Lys-495 is subject to N6-acetyllysine; alternate. Lys-495 carries the N6-succinyllysine; alternate modification. N6-acetyllysine is present on Lys-511.

This sequence belongs to the AccD/PCCB family. In terms of assembly, probably a dodecamer composed of six biotin-containing alpha subunits (MCCC1) and six beta (MCCC2) subunits.

Its subcellular location is the mitochondrion matrix. The catalysed reaction is 3-methylbut-2-enoyl-CoA + hydrogencarbonate + ATP = 3-methyl-(2E)-glutaconyl-CoA + ADP + phosphate + H(+). Its pathway is amino-acid degradation; L-leucine degradation; (S)-3-hydroxy-3-methylglutaryl-CoA from 3-isovaleryl-CoA: step 2/3. Functionally, carboxyltransferase subunit of the 3-methylcrotonyl-CoA carboxylase, an enzyme that catalyzes the conversion of 3-methylcrotonyl-CoA to 3-methylglutaconyl-CoA, a critical step for leucine and isovaleric acid catabolism. In Rattus norvegicus (Rat), this protein is Methylcrotonoyl-CoA carboxylase beta chain, mitochondrial (Mccc2).